Here is a 93-residue protein sequence, read N- to C-terminus: Putative septation protein SpoVG (93 aa).

Belongs to the SpoVG family.

Could be involved in septation. This chain is Putative septation protein SpoVG, found in Fusobacterium nucleatum subsp. nucleatum (strain ATCC 25586 / DSM 15643 / BCRC 10681 / CIP 101130 / JCM 8532 / KCTC 2640 / LMG 13131 / VPI 4355).